A 207-amino-acid polypeptide reads, in one-letter code: Probable GTP-binding protein EngB (207 aa).

Residues 23-203 (GAPEVCFVGR…GAHIENWISP (181 aa)) form the EngB-type G domain. Residues 31–38 (GRSNAGKS), 58–62 (GRTRL), 83–86 (DLPG), 150–153 (TKAD), and 182–184 (FSS) each bind GTP. Positions 38 and 60 each coordinate Mg(2+).

The protein belongs to the TRAFAC class TrmE-Era-EngA-EngB-Septin-like GTPase superfamily. EngB GTPase family. The cofactor is Mg(2+).

Functionally, necessary for normal cell division and for the maintenance of normal septation. The protein is Probable GTP-binding protein EngB of Bordetella bronchiseptica (strain ATCC BAA-588 / NCTC 13252 / RB50) (Alcaligenes bronchisepticus).